Here is a 704-residue protein sequence, read N- to C-terminus: Elongation factor G (704 aa).

Residues 8–290 form the tr-type G domain; that stretch reads EKYRNIGICA…GVVRYLPAPN (283 aa). GTP-binding positions include 17 to 24, 88 to 92, and 142 to 145; these read AHVDAGKT, DTPGH, and NKMD.

It belongs to the TRAFAC class translation factor GTPase superfamily. Classic translation factor GTPase family. EF-G/EF-2 subfamily.

It is found in the cytoplasm. In terms of biological role, catalyzes the GTP-dependent ribosomal translocation step during translation elongation. During this step, the ribosome changes from the pre-translocational (PRE) to the post-translocational (POST) state as the newly formed A-site-bound peptidyl-tRNA and P-site-bound deacylated tRNA move to the P and E sites, respectively. Catalyzes the coordinated movement of the two tRNA molecules, the mRNA and conformational changes in the ribosome. The chain is Elongation factor G from Francisella tularensis subsp. holarctica (strain FTNF002-00 / FTA).